Reading from the N-terminus, the 248-residue chain is Isoprenyl transferase (248 aa).

Residue Asp23 is part of the active site. Asp23 lines the Mg(2+) pocket. Residues 24–27, Trp28, Arg36, His40, and 68–70 each bind substrate; these read GNGR and STE. Catalysis depends on Asn71, which acts as the Proton acceptor. Residues Trp72, Arg74, Arg185, and 191 to 193 contribute to the substrate site; that span reads RIS. A Mg(2+)-binding site is contributed by Glu204.

It belongs to the UPP synthase family. As to quaternary structure, homodimer. It depends on Mg(2+) as a cofactor.

Its function is as follows. Catalyzes the condensation of isopentenyl diphosphate (IPP) with allylic pyrophosphates generating different type of terpenoids. This Neisseria meningitidis serogroup A / serotype 4A (strain DSM 15465 / Z2491) protein is Isoprenyl transferase.